Consider the following 500-residue polypeptide: Probable cytosol aminopeptidase (500 aa).

Residues Lys-274 and Asp-279 each contribute to the Mn(2+) site. Lys-286 is a catalytic residue. Positions 297, 356, and 358 each coordinate Mn(2+). Residue Arg-360 is part of the active site.

This sequence belongs to the peptidase M17 family. Mn(2+) is required as a cofactor.

Its subcellular location is the cytoplasm. It carries out the reaction Release of an N-terminal amino acid, Xaa-|-Yaa-, in which Xaa is preferably Leu, but may be other amino acids including Pro although not Arg or Lys, and Yaa may be Pro. Amino acid amides and methyl esters are also readily hydrolyzed, but rates on arylamides are exceedingly low.. It catalyses the reaction Release of an N-terminal amino acid, preferentially leucine, but not glutamic or aspartic acids.. Functionally, presumably involved in the processing and regular turnover of intracellular proteins. Catalyzes the removal of unsubstituted N-terminal amino acids from various peptides. This chain is Probable cytosol aminopeptidase, found in Saccharophagus degradans (strain 2-40 / ATCC 43961 / DSM 17024).